The primary structure comprises 60 residues: Large ribosomal subunit protein bL32 (60 aa).

Over residues 1-23 (MAKHPVPKKKTSKSKRDMRRSHH) the composition is skewed to basic residues. Residues 1 to 34 (MAKHPVPKKKTSKSKRDMRRSHHALTAPNLTECP) form a disordered region. Cys33, Cys36, Cys46, and Cys49 together coordinate Zn(2+). The C4-type zinc-finger motif lies at 33–49 (CPQCHGKKLSHHICPNC).

Belongs to the bacterial ribosomal protein bL32 family. In terms of assembly, part of the 50S ribosomal subunit. Contacts proteins L17 and L22. It depends on Zn(2+) as a cofactor.

Functionally, forms a cluster with L17 and L22, and with L22, a pair of 'tweezers' that hold together all the domains of the 23S rRNA. Interacts with the antibiotic troleandomycin which blocks the peptide exit tunnel. The polypeptide is Large ribosomal subunit protein bL32 (rpmF) (Deinococcus radiodurans (strain ATCC 13939 / DSM 20539 / JCM 16871 / CCUG 27074 / LMG 4051 / NBRC 15346 / NCIMB 9279 / VKM B-1422 / R1)).